The sequence spans 164 residues: UPF0225 protein Shewana3_2159 (164 aa).

Belongs to the UPF0225 family.

This Shewanella sp. (strain ANA-3) protein is UPF0225 protein Shewana3_2159.